The following is a 60-amino-acid chain: UPF0434 protein Daci_3569 (60 aa).

Belongs to the UPF0434 family.

This chain is UPF0434 protein Daci_3569, found in Delftia acidovorans (strain DSM 14801 / SPH-1).